A 90-amino-acid polypeptide reads, in one-letter code: Probable Fe(2+)-trafficking protein (90 aa).

This sequence belongs to the Fe(2+)-trafficking protein family. In terms of assembly, monomer.

In terms of biological role, could be a mediator in iron transactions between iron acquisition and iron-requiring processes, such as synthesis and/or repair of Fe-S clusters in biosynthetic enzymes. The protein is Probable Fe(2+)-trafficking protein of Enterobacter sp. (strain 638).